Here is a 159-residue protein sequence, read N- to C-terminus: Transcriptional repressor NrdR (159 aa).

Polar residues predominate over residues 1 to 11 (MQCPTCQNTDS). The disordered stretch occupies residues 1–21 (MQCPTCQNTDSRVLESRSADS). Residues 3 to 34 (CPTCQNTDSRVLESRSADSGKSVRRRRECLNC) fold into a zinc finger. Residues 49–139 (VSVLKKDGSR…VYRKFNGVKD (91 aa)) form the ATP-cone domain.

This sequence belongs to the NrdR family. Requires Zn(2+) as cofactor.

Negatively regulates transcription of bacterial ribonucleotide reductase nrd genes and operons by binding to NrdR-boxes. In Prochlorococcus marinus (strain MIT 9301), this protein is Transcriptional repressor NrdR.